The sequence spans 571 residues: MNQTRVFLIFAWLMVAVLLWMEWSREKAAPTPAPTTTSAPAAAQSVPGATPGSVPNAQVPGAPGQAAVQAQASATPASQRVTVTTDVLRLVLDGGRVLDAELLQFPQTKDEGSPPVRLLTEDPAHPYSAISGWASEDKNTPVPGADGFKLVGDTKDFVLAKGQNELQIPFVWTADSGVTIKRTLTVSRNEYAVRFKDEVSNTGAAPWNGYVYRTLDRTPTILSRSMTNPDSFSFNGATWYDNDKKYQRRAFKDYLEDGTLNQNITGGWLAMLQHHFFTAWIPQKDQTAHYVLSQVAGRDLIEARGPAFTVAPGQSTSTEARLWVGPKLVNLIAKEDVPGLDRVVDYSRFSMMAVIGQGLFWVLNQVHKLVGNWGWAIVGLVVLLKLVLYPLSATQYKSGAKMRRFQPRIAQLKERYGDDRQKFQTAMMELYKKEKINPMGGCLPILIQMPIFFALYWVLVESVELRQAPWFGWIQDLTARDPYFILPVINVAVMWFTQKLTPAPGMDPMQQKMMQFMPLVFGVMMAFMPSGLVLYWVVNGGLGLLQQWWMTKRHGGEPVPATTAPAPVKKK.

A helical membrane pass occupies residues 4–24 (TRVFLIFAWLMVAVLLWMEWS). The segment at 29 to 76 (APTPAPTTTSAPAAAQSVPGATPGSVPNAQVPGAPGQAAVQAQASATP) is disordered. Composition is skewed to low complexity over residues 34 to 43 (PTTTSAPAAA) and 57 to 76 (AQVP…SATP). The next 4 helical transmembrane spans lie at 369 to 389 (LVGN…LVLY), 440 to 460 (GGCL…WVLV), 483 to 503 (YFIL…LTPA), and 518 to 538 (PLVF…YWVV).

It belongs to the OXA1/ALB3/YidC family. Type 1 subfamily. As to quaternary structure, interacts with the Sec translocase complex via SecD. Specifically interacts with transmembrane segments of nascent integral membrane proteins during membrane integration.

The protein resides in the cell inner membrane. Its function is as follows. Required for the insertion and/or proper folding and/or complex formation of integral membrane proteins into the membrane. Involved in integration of membrane proteins that insert both dependently and independently of the Sec translocase complex, as well as at least some lipoproteins. Aids folding of multispanning membrane proteins. The chain is Membrane protein insertase YidC from Stenotrophomonas maltophilia (strain R551-3).